A 436-amino-acid polypeptide reads, in one-letter code: GTPase Der (436 aa).

EngA-type G domains follow at residues 4–167 (PVVA…PKVE) and 176–351 (IRFC…ESHN). Residues 10-17 (GRPNVGKS), 57-61 (DTGGI), 119-122 (NKVD), 182-189 (GRPNVGKS), 229-233 (DTAGM), and 294-297 (NKWD) contribute to the GTP site. The region spanning 352-436 (IRVQTNVLND…PIRIIARARD (85 aa)) is the KH-like domain.

Belongs to the TRAFAC class TrmE-Era-EngA-EngB-Septin-like GTPase superfamily. EngA (Der) GTPase family. As to quaternary structure, associates with the 50S ribosomal subunit.

Its function is as follows. GTPase that plays an essential role in the late steps of ribosome biogenesis. This chain is GTPase Der, found in Bacillus cytotoxicus (strain DSM 22905 / CIP 110041 / 391-98 / NVH 391-98).